Here is a 151-residue protein sequence, read N- to C-terminus: 3-dehydroquinate dehydratase (151 aa).

The active-site Proton acceptor is Tyr-24. Substrate contacts are provided by Asn-76, His-82, and Asp-89. His-102 functions as the Proton donor in the catalytic mechanism. Residues 103 to 104 (VS) and Arg-113 each bind substrate.

The protein belongs to the type-II 3-dehydroquinase family. As to quaternary structure, homododecamer.

It catalyses the reaction 3-dehydroquinate = 3-dehydroshikimate + H2O. The protein operates within metabolic intermediate biosynthesis; chorismate biosynthesis; chorismate from D-erythrose 4-phosphate and phosphoenolpyruvate: step 3/7. Catalyzes a trans-dehydration via an enolate intermediate. The polypeptide is 3-dehydroquinate dehydratase (Rhodopseudomonas palustris (strain BisA53)).